We begin with the raw amino-acid sequence, 423 residues long: Protein CLP1 homolog (423 aa).

ATP is bound by residues glutamate 16, lysine 57, and 119–124 (DVGKST).

This sequence belongs to the Clp1 family. Clp1 subfamily.

It is found in the nucleus. Required for endonucleolytic cleavage during polyadenylation-dependent pre-mRNA 3'-end formation. The chain is Protein CLP1 homolog (cbc) from Drosophila melanogaster (Fruit fly).